The chain runs to 968 residues: Isoleucine--tRNA ligase (968 aa).

A 'HIGH' region motif is present at residues 68–78 (PYANGALHMGH). Glutamate 584 is a binding site for L-isoleucyl-5'-AMP. Positions 625 to 629 (KMSKS) match the 'KMSKS' region motif. Residue lysine 628 coordinates ATP. Cysteine 938, cysteine 941, cysteine 958, and cysteine 961 together coordinate Zn(2+).

Belongs to the class-I aminoacyl-tRNA synthetase family. IleS type 1 subfamily. Monomer. The cofactor is Zn(2+).

It localises to the cytoplasm. The catalysed reaction is tRNA(Ile) + L-isoleucine + ATP = L-isoleucyl-tRNA(Ile) + AMP + diphosphate. Functionally, catalyzes the attachment of isoleucine to tRNA(Ile). As IleRS can inadvertently accommodate and process structurally similar amino acids such as valine, to avoid such errors it has two additional distinct tRNA(Ile)-dependent editing activities. One activity is designated as 'pretransfer' editing and involves the hydrolysis of activated Val-AMP. The other activity is designated 'posttransfer' editing and involves deacylation of mischarged Val-tRNA(Ile). This Synechococcus sp. (strain CC9311) protein is Isoleucine--tRNA ligase.